The sequence spans 26 residues: RNEEERLINHLFKERGYNKELRPAQT.

It belongs to the ligand-gated ion channel (TC 1.A.9) family. Acetylcholine receptor (TC 1.A.9.1) subfamily. In terms of assembly, pentamer of two alpha chains, and one each of the beta, delta, and gamma chains.

It is found in the postsynaptic cell membrane. It localises to the cell membrane. The catalysed reaction is K(+)(in) = K(+)(out). The enzyme catalyses Na(+)(in) = Na(+)(out). Functionally, after binding acetylcholine, the AChR responds by an extensive change in conformation that affects all subunits and leads to opening of an ion-conducting channel across the plasma membrane. This is Acetylcholine receptor subunit delta (chrnd) from Electrophorus electricus (Electric eel).